The chain runs to 581 residues: Aspartate--tRNA ligase (581 aa).

Glutamate 170 lines the L-aspartate pocket. The interval 194–197 is aspartate; sequence QLFK. Arginine 216 is an L-aspartate binding site. ATP-binding positions include 216 to 218 and glutamine 225; that span reads RDE. Residue histidine 440 participates in L-aspartate binding. Glutamate 469 contributes to the ATP binding site. Arginine 476 lines the L-aspartate pocket. 521–524 serves as a coordination point for ATP; the sequence is GFDR.

The protein belongs to the class-II aminoacyl-tRNA synthetase family. Type 1 subfamily. Homodimer.

The protein resides in the cytoplasm. It catalyses the reaction tRNA(Asp) + L-aspartate + ATP = L-aspartyl-tRNA(Asp) + AMP + diphosphate. Catalyzes the attachment of L-aspartate to tRNA(Asp) in a two-step reaction: L-aspartate is first activated by ATP to form Asp-AMP and then transferred to the acceptor end of tRNA(Asp). This chain is Aspartate--tRNA ligase, found in Thermosipho africanus (strain TCF52B).